A 237-amino-acid polypeptide reads, in one-letter code: MANRYLHNVQGLFDTIAPNYDRMNNIISLGTHRHWRKQTMAQIHLASNAHVLDLCCGTGDWTIALAKELQAPGEVIGLDFSAPMLKLAQQKVTQQQVADRVWLRRGNAMHLPFKDNTFDLVTIGFGLRNLPDKAQALTEIYRVLKPGARLVCLETSQPDQPLIKPVWQWYFTKVVPLFGRLFAHQYQEYSYLQETTRHFASYQQLATMFQQAGFQNVHFQRFNFGAAAAHFGTKEAK.

Residues Thr-58, Asp-79, and 107-108 (NA) each bind S-adenosyl-L-methionine.

It belongs to the class I-like SAM-binding methyltransferase superfamily. MenG/UbiE family.

It catalyses the reaction a 2-demethylmenaquinol + S-adenosyl-L-methionine = a menaquinol + S-adenosyl-L-homocysteine + H(+). It functions in the pathway quinol/quinone metabolism; menaquinone biosynthesis; menaquinol from 1,4-dihydroxy-2-naphthoate: step 2/2. Its function is as follows. Methyltransferase required for the conversion of demethylmenaquinol (DMKH2) to menaquinol (MKH2). This Lactiplantibacillus plantarum (strain ATCC BAA-793 / NCIMB 8826 / WCFS1) (Lactobacillus plantarum) protein is Demethylmenaquinone methyltransferase.